The chain runs to 416 residues: Putative pseudouridine transporter (416 aa).

The Periplasmic portion of the chain corresponds to 1–2; sequence MD. A helical transmembrane segment spans residues 3 to 23; sequence IMRSVVGMVVLLAIAFLLSVN. Topologically, residues 24–31 are cytoplasmic; the sequence is KKSISLRT. A helical membrane pass occupies residues 32–52; sequence VGAALLLQIAIGGIMLYFPPG. Residues 53-104 lie on the Periplasmic side of the membrane; that stretch reads KWAVEQAALGVHKVMSYSDAGSAFIFGSLVGPKMDVLFDGAGFIFAFRVLPA. Residues 105-125 form a helical membrane-spanning segment; sequence IIFVTALISLLYYIGVMGLLI. The Cytoplasmic segment spans residues 126 to 172; it reads RILGSIFQKALNISKIESFVAVTTIFLGQNEIPAIVKPFIDRMNRNE. Residues 173-193 traverse the membrane as a helical segment; the sequence is LFTAICSGMASIAGSMMIGYA. The Periplasmic segment spans residues 194-196; sequence GMG. The chain crosses the membrane as a helical span at residues 197–217; that stretch reads VPIDYLLAASLMAIPGGILFA. Residues 218 to 268 lie on the Cytoplasmic side of the membrane; that stretch reads RILSPATEPSQVTFENLSFSETPPKSFIEAAASGAMTGLKIAAGVATVVMA. The chain crosses the membrane as a helical span at residues 269–289; it reads FVAIIALINGIIGGIGGWFGF. Residues 290–352 lie on the Periplasmic side of the membrane; that stretch reads ANASLESIFG…QTGGTLEVKT (63 aa). Residues 353–373 traverse the membrane as a helical segment; that stretch reads IAIISFALCGFANFGSIGVVV. Residues 374-394 are Cytoplasmic-facing; that stretch reads GAFSAISPKRAPEIAQLGLRA. Residues 395-415 form a helical membrane-spanning segment; that stretch reads LAAATLSNLMSATIAGFFIGL. Ala416 is a topological domain (periplasmic).

This sequence belongs to the concentrative nucleoside transporter (CNT) (TC 2.A.41) family.

It localises to the cell inner membrane. Its function is as follows. Could be involved in pseudouridine transport. This is Putative pseudouridine transporter (psuT) from Escherichia coli (strain K12).